The chain runs to 78 residues: Large ribosomal subunit protein bL28 (78 aa).

The protein belongs to the bacterial ribosomal protein bL28 family.

The polypeptide is Large ribosomal subunit protein bL28 (Parasynechococcus marenigrum (strain WH8102)).